The primary structure comprises 1138 residues: Pesticidal crystal protein Cry7Aa (1138 aa).

It belongs to the delta endotoxin family.

In terms of biological role, promotes colloidosmotic lysis by binding to the midgut epithelial cells of Coleoptera. This protein is not toxic in its natural form. It is highly toxic to Colorado potato beetle larvae after an in vitro solubilization and trypsin activation step. The protein is Pesticidal crystal protein Cry7Aa (cry7Aa) of Bacillus thuringiensis.